Reading from the N-terminus, the 327-residue chain is Phenylalanine--tRNA ligase alpha subunit (327 aa).

Glu252 is a Mg(2+) binding site.

The protein belongs to the class-II aminoacyl-tRNA synthetase family. Phe-tRNA synthetase alpha subunit type 1 subfamily. Tetramer of two alpha and two beta subunits. The cofactor is Mg(2+).

Its subcellular location is the cytoplasm. It carries out the reaction tRNA(Phe) + L-phenylalanine + ATP = L-phenylalanyl-tRNA(Phe) + AMP + diphosphate + H(+). The sequence is that of Phenylalanine--tRNA ligase alpha subunit from Shewanella oneidensis (strain ATCC 700550 / JCM 31522 / CIP 106686 / LMG 19005 / NCIMB 14063 / MR-1).